The sequence spans 375 residues: 23S rRNA (uracil(747)-C(5))-methyltransferase RlmC (375 aa).

Positions 3, 11, 14, and 87 each coordinate [4Fe-4S] cluster. Gln212, Phe241, Glu262, and Asn307 together coordinate S-adenosyl-L-methionine. Catalysis depends on Cys334, which acts as the Nucleophile.

This sequence belongs to the class I-like SAM-binding methyltransferase superfamily. RNA M5U methyltransferase family. RlmC subfamily.

The enzyme catalyses uridine(747) in 23S rRNA + S-adenosyl-L-methionine = 5-methyluridine(747) in 23S rRNA + S-adenosyl-L-homocysteine + H(+). Catalyzes the formation of 5-methyl-uridine at position 747 (m5U747) in 23S rRNA. The polypeptide is 23S rRNA (uracil(747)-C(5))-methyltransferase RlmC (Escherichia coli (strain K12 / MC4100 / BW2952)).